Here is an 86-residue protein sequence, read N- to C-terminus: Insulin (86 aa).

Intrachain disulfides connect Cys-7-Cys-72, Cys-19-Cys-85, and Cys-71-Cys-76. Positions 33-63 (EAEDPQVGEVELGGGPGLGGLQPLALAGPQQ) are cleaved as a propeptide — c peptide.

The protein belongs to the insulin family. Heterodimer of a B chain and an A chain linked by two disulfide bonds.

The protein localises to the secreted. Functionally, insulin decreases blood glucose concentration. It increases cell permeability to monosaccharides, amino acids and fatty acids. It accelerates glycolysis, the pentose phosphate cycle, and glycogen synthesis in liver. The sequence is that of Insulin (INS) from Equus caballus (Horse).